The sequence spans 431 residues: ATP-dependent protease ATPase subunit HslU (431 aa).

ATP-binding positions include Val18, 60 to 65 (GVGKTE), Asp244, Glu309, and Arg381.

The protein belongs to the ClpX chaperone family. HslU subfamily. A double ring-shaped homohexamer of HslV is capped on each side by a ring-shaped HslU homohexamer. The assembly of the HslU/HslV complex is dependent on binding of ATP.

The protein resides in the cytoplasm. ATPase subunit of a proteasome-like degradation complex; this subunit has chaperone activity. The binding of ATP and its subsequent hydrolysis by HslU are essential for unfolding of protein substrates subsequently hydrolyzed by HslV. HslU recognizes the N-terminal part of its protein substrates and unfolds these before they are guided to HslV for hydrolysis. The protein is ATP-dependent protease ATPase subunit HslU of Caulobacter sp. (strain K31).